Consider the following 461-residue polypeptide: Argininosuccinate lyase (461 aa).

It belongs to the lyase 1 family. Argininosuccinate lyase subfamily.

Its subcellular location is the cytoplasm. It carries out the reaction 2-(N(omega)-L-arginino)succinate = fumarate + L-arginine. It participates in amino-acid biosynthesis; L-arginine biosynthesis; L-arginine from L-ornithine and carbamoyl phosphate: step 3/3. This chain is Argininosuccinate lyase, found in Symbiobacterium thermophilum (strain DSM 24528 / JCM 14929 / IAM 14863 / T).